We begin with the raw amino-acid sequence, 111 residues long: Putative splicing factor C222.18 (111 aa).

One can recognise an RRM domain in the interval 18-95; it reads HTLYIRNFGT…DIIFVEWAKS (78 aa).

This sequence belongs to the splicing factor SR family.

It is found in the nucleus. In terms of biological role, has a role in pre-mRNA splicing where it is involved in spliceosome assembly. The polypeptide is Putative splicing factor C222.18 (Schizosaccharomyces pombe (strain 972 / ATCC 24843) (Fission yeast)).